The following is a 654-amino-acid chain: Fatty acid photodecarboxylase, chloroplastic (654 aa).

The transit peptide at 1 to 62 (MASITSRASA…RRGGALSARA (62 aa)) directs the protein to the chloroplast. FAD contacts are provided by residues 93-94 (TA), E114, L162, S166, 170-173 (NATL), and V298. Residues C432, R451, Y466, and Q486 each contribute to the hexadecanoate site. G622 serves as a coordination point for FAD.

This sequence belongs to the GMC oxidoreductase family. It depends on FAD as a cofactor.

The protein resides in the plastid. It localises to the chloroplast. It carries out the reaction a long-chain fatty acid + hnu + H(+) = a long-chain alkane + CO2. The catalysed reaction is hnu + hexadecanoate + H(+) = pentadecane + CO2. The enzyme catalyses hnu + octadecanoate + H(+) = heptadecane + CO2. It catalyses the reaction heptadecanoate + hnu + H(+) = hexadecane + CO2. It carries out the reaction hnu + tetradecanoate + H(+) = tridecane + CO2. The catalysed reaction is octanoate + hnu + H(+) = heptane + CO2. Its activity is regulated as follows. Activated by blue light and repressed by red light. Catalyzes the decarboxylation of free fatty acids to n-alkanes or n-alkenes in response to blue light. Substrate preference is toward fatty acids with C16 or C17 chains. Converts n-octanoic acid (C8 chain) more efficiently than palmitate (n-hexadecanoic acid, C16 chain) into n-heptane (C7 chain) and n-pentadecane (C15 chain), respectively, partly due to an autocatalytic effect of its n-heptane product. Saturated fatty acids are converted to alkanes, not alkenes. The decarboxylation is initiated through electron abstraction from the fatty acid by the photo-excited FAD. In Chlorella variabilis (Green alga), this protein is Fatty acid photodecarboxylase, chloroplastic.